A 525-amino-acid polypeptide reads, in one-letter code: NAD(P)H-quinone oxidoreductase subunit 2 (525 aa).

14 helical membrane passes run 14 to 34 (AIWPEVVVTLTLLIVLVVDLV), 42 to 62 (SLPALSLFGLLGALVTLVLQW), 78 to 98 (PVSILFRGLVVATAALTVMMA), 117 to 137 (LTATLGGMFLAGATDLIMVFV), 167 to 187 (LLTGASSTAIFLYGMSLLYGL), 201 to 221 (LANAGLVGILALVFCLGGIGF), 240 to 260 (PTPVVAFLSVGSKAAGFALAI), 276 to 296 (AVLSVLAILTMVLGNVVAIAQ), 302 to 322 (LLAYSSIGQAGFVLIGLVAGT), 330 to 350 (IFYLMVYLAMNLGAFLCVTLF), 374 to 394 (LCLSICLLSLGGLPPLAGFFG), 396 to 416 (LYLFWAGWQAGEYTLVLVGLV), 462 to 482 (VGMVVTLVATIFAGILSNPLF), and 494 to 514 (FLGFPTAQAFAPGSASPSLAV).

It belongs to the complex I subunit 2 family. In terms of assembly, NDH-1 can be composed of about 15 different subunits; different subcomplexes with different compositions have been identified which probably have different functions.

It is found in the cellular thylakoid membrane. The enzyme catalyses a plastoquinone + NADH + (n+1) H(+)(in) = a plastoquinol + NAD(+) + n H(+)(out). It catalyses the reaction a plastoquinone + NADPH + (n+1) H(+)(in) = a plastoquinol + NADP(+) + n H(+)(out). Its function is as follows. NDH-1 shuttles electrons from an unknown electron donor, via FMN and iron-sulfur (Fe-S) centers, to quinones in the respiratory and/or the photosynthetic chain. The immediate electron acceptor for the enzyme in this species is believed to be plastoquinone. Couples the redox reaction to proton translocation, and thus conserves the redox energy in a proton gradient. Cyanobacterial NDH-1 also plays a role in inorganic carbon-concentration. In Synechococcus sp. (strain JA-3-3Ab) (Cyanobacteria bacterium Yellowstone A-Prime), this protein is NAD(P)H-quinone oxidoreductase subunit 2.